We begin with the raw amino-acid sequence, 320 residues long: MELLSPPLRDVDLTAPDGSLCSFATTDDFYDDPCFDSPDLRFFEDLDPRLMHVGALLKPEEHSHFPAAVHPAPGAREDEHVRAPSGHHQAGRCLLWACKACKRKTTNADRRKAATMRERRRLSKVNEAFETLKRCTSSNPNQRLPKVEILRNAIRYIEGLQALLRDQDAAPPGAAAAFYAPGPLPPGRGGEHYSGDSDASSPRSNCSDGMMDYSGPPSGARRRNCYEGAYYNEAPSEPRPGKSAAVSSLDCLSSIVERISTESPAAPALLLADVPSESPPRRQEAAAPSEGESSGDPTQSPDAAPQCPAGANPNPIYQVL.

Methionine 1 is covalently cross-linked (Peptide (Met-Gly) (interchain with G-Cter in ubiquitin)). Lysine 104 carries the post-translational modification N6-methyllysine; by EHMT2. The bHLH domain occupies 109 to 160 (DRRKAATMRERRRLSKVNEAFETLKRCTSSNPNQRLPKVEILRNAIRYIEGL). Disordered regions lie at residues 174–219 (AAAA…PPSG) and 262–320 (ESPA…YQVL). Composition is skewed to polar residues over residues 197–207 (SDASSPRSNCS) and 291–301 (GESSGDPTQSP).

Efficient DNA binding requires dimerization with another bHLH protein. Seems to form active heterodimers with ITF-2. Interacts with SUV39H1. Interacts with DDX5. Interacts with CHD2. Interacts with TSC22D3. Interacts with SETD3. Interacts with P-TEFB complex; promotes the transcriptional activity of MYOD1 through its CDK9-mediated phosphorylation. Interacts with CSRP3. Interacts with NUPR1. In terms of processing, phosphorylated by CDK9. This phosphorylation promotes its function in muscle differentiation. Post-translationally, acetylated by a complex containing EP300 and PCAF. The acetylation is essential to activate target genes. Conversely, its deacetylation by SIRT1 inhibits its function. Ubiquitinated on the N-terminus; which is required for proteasomal degradation. In terms of processing, methylation at Lys-104 by EHMT2/G9a inhibits myogenic activity.

The protein localises to the nucleus. Acts as a transcriptional activator that promotes transcription of muscle-specific target genes and plays a role in muscle differentiation. Together with MYF5 and MYOG, co-occupies muscle-specific gene promoter core region during myogenesis. Induces fibroblasts to differentiate into myoblasts. Interacts with and is inhibited by the twist protein. This interaction probably involves the basic domains of both proteins. In Homo sapiens (Human), this protein is Myoblast determination protein 1 (MYOD1).